The sequence spans 1119 residues: G8 domain-containing protein DDB_G0288475 (1119 aa).

Residues 1 to 22 form the signal peptide; it reads MKYSSFLLLFIYIFFILNNINA. Residues 276-404 form the G8 domain; sequence TIWTSGVVPL…YHNTWTKLAA (129 aa). N-linked (GlcNAc...) asparagine glycans are attached at residues N308, N559, N736, N854, N968, N1035, N1056, and N1070.

The protein belongs to the comF family.

The protein resides in the secreted. This is G8 domain-containing protein DDB_G0288475 from Dictyostelium discoideum (Social amoeba).